The sequence spans 139 residues: Sec-independent protein translocase protein TatB (139 aa).

The helical transmembrane segment at 1-21 (MFDMGFLELMLIGVVALLVLG) threads the bilayer. The segment covering 66–86 (QQRKLDAGLGKVRDEVERHGD) has biased composition (basic and acidic residues). The tract at residues 66–139 (QQRKLDAGLG…APSAKDSNAP (74 aa)) is disordered.

It belongs to the TatB family. As to quaternary structure, the Tat system comprises two distinct complexes: a TatABC complex, containing multiple copies of TatA, TatB and TatC subunits, and a separate TatA complex, containing only TatA subunits. Substrates initially bind to the TatABC complex, which probably triggers association of the separate TatA complex to form the active translocon.

Its subcellular location is the cell inner membrane. In terms of biological role, part of the twin-arginine translocation (Tat) system that transports large folded proteins containing a characteristic twin-arginine motif in their signal peptide across membranes. Together with TatC, TatB is part of a receptor directly interacting with Tat signal peptides. TatB may form an oligomeric binding site that transiently accommodates folded Tat precursor proteins before their translocation. The polypeptide is Sec-independent protein translocase protein TatB (Chromohalobacter salexigens (strain ATCC BAA-138 / DSM 3043 / CIP 106854 / NCIMB 13768 / 1H11)).